A 313-amino-acid chain; its full sequence is Ribosomal RNA small subunit methyltransferase H (313 aa).

Residues 35 to 37, Asp-55, Phe-79, Asp-101, and Gln-108 each bind S-adenosyl-L-methionine; that span reads GGH.

Belongs to the methyltransferase superfamily. RsmH family.

It localises to the cytoplasm. It carries out the reaction cytidine(1402) in 16S rRNA + S-adenosyl-L-methionine = N(4)-methylcytidine(1402) in 16S rRNA + S-adenosyl-L-homocysteine + H(+). Its function is as follows. Specifically methylates the N4 position of cytidine in position 1402 (C1402) of 16S rRNA. This is Ribosomal RNA small subunit methyltransferase H from Musicola paradisiaca (strain Ech703) (Dickeya paradisiaca).